The following is a 140-amino-acid chain: Small ribosomal subunit protein eS17y (140 aa).

This sequence belongs to the eukaryotic ribosomal protein eS17 family.

The sequence is that of Small ribosomal subunit protein eS17y (RPS17B) from Arabidopsis thaliana (Mouse-ear cress).